We begin with the raw amino-acid sequence, 510 residues long: Maturase K (510 aa).

This sequence belongs to the intron maturase 2 family. MatK subfamily.

The protein localises to the plastid. Functionally, usually encoded in the trnK tRNA gene intron. Probably assists in splicing its own and other chloroplast group II introns. This chain is Maturase K, found in Aneura mirabilis (Parasitic liverwort).